The sequence spans 135 residues: Large ribosomal subunit protein uL22c (135 aa).

Belongs to the universal ribosomal protein uL22 family. In terms of assembly, part of the 50S ribosomal subunit.

The protein localises to the plastid. In terms of biological role, this protein binds specifically to 23S rRNA. Functionally, the globular domain of the protein is located near the polypeptide exit tunnel on the outside of the subunit, while an extended beta-hairpin is found that lines the wall of the exit tunnel in the center of the 70S ribosome. In Cuscuta exaltata (Tall dodder), this protein is Large ribosomal subunit protein uL22c (rpl22).